An 889-amino-acid polypeptide reads, in one-letter code: Oxysterol-binding protein-related protein 8 (889 aa).

Met-1 carries the post-translational modification N-acetylmethionine. The interval 1-129 is disordered; that stretch reads MEAALADGEP…SLKVQKKNYR (129 aa). 3 positions are modified to phosphoserine: Ser-14, Ser-65, and Ser-68. Residues 62–71 show a composition bias toward polar residues; it reads PSLSPASLHS. Basic and acidic residues-rich tracts occupy residues 73 to 88, 95 to 109, and 116 to 129; these read GFER…KDDS, SKSE…EKDS, and TKKE…KNYR. Positions 148–265 constitute a PH domain; sequence VIVMADWLKI…WMDALELALK (118 aa). Ser-314, Ser-328, and Ser-342 each carry phosphoserine. Over residues 321-336 the composition is skewed to basic and acidic residues; it reads FKDQDLYSDKSDKEND. A disordered region spans residues 321-374; sequence FKDQDLYSDKSDKENDPEHDESDNEVLGKSEESDTDTSERQDDSYIDPEPVEPL. Over residues 346–363 the composition is skewed to basic and acidic residues; sequence VLGKSEESDTDTSERQDD. A 1,2-diacyl-sn-glycero-3-phospho-(1D-myo-inositol 4-phosphate) is bound by residues 420–425, 482–485, and 514–515; these read LSRVVL, KPYN, and HH. Residues 420-425 and Asn-485 contribute to the a 1,2-diacyl-sn-glycero-3-phospho-L-serine site; that span reads LSRVVL. Ser-540 provides a ligand contact to a 1,2-diacyl-sn-glycero-3-phospho-L-serine. The a 1,2-diacyl-sn-glycero-3-phospho-(1D-myo-inositol 4-phosphate) site is built by Lys-706, Glu-710, and Arg-714. The tract at residues 772–823 is disordered; it reads HRTPMVSVPKMKHKPTRQQKKVVKGYSSPEPDIQDSSGSEAQSVKPSTRRKK. Residues 781–794 are compositionally biased toward basic residues; that stretch reads KMKHKPTRQQKKVV. Positions 805-817 are enriched in polar residues; the sequence is QDSSGSEAQSVKP. Phosphoserine is present on residues Ser-807, Ser-808, Ser-810, and Ser-814. The chain crosses the membrane as a helical span at residues 871–888; the sequence is YFVIFLLILLQVIINFIF.

The protein belongs to the OSBP family. Interacts with SPAG5. Interacts with NUP62. In terms of tissue distribution, widely expressed. Most abundant in liver, spleen, kidney, brain and adipose tissue.

It localises to the endoplasmic reticulum membrane. It is found in the nucleus membrane. Its function is as follows. Lipid transporter involved in lipid countertransport between the endoplasmic reticulum and the plasma membrane: specifically exchanges phosphatidylserine with phosphatidylinositol 4-phosphate (PI4P), delivering phosphatidylserine to the plasma membrane in exchange for PI4P, which is degraded by the SAC1/SACM1L phosphatase in the endoplasmic reticulum. Binds phosphatidylserine and PI4P in a mutually exclusive manner. Binds oxysterol, 25-hydroxycholesterol and cholesterol. The chain is Oxysterol-binding protein-related protein 8 from Mus musculus (Mouse).